We begin with the raw amino-acid sequence, 166 residues long: Large ribosomal subunit protein uL10 (166 aa).

This sequence belongs to the universal ribosomal protein uL10 family. As to quaternary structure, part of the ribosomal stalk of the 50S ribosomal subunit. The N-terminus interacts with L11 and the large rRNA to form the base of the stalk. The C-terminus forms an elongated spine to which L12 dimers bind in a sequential fashion forming a multimeric L10(L12)X complex.

Functionally, forms part of the ribosomal stalk, playing a central role in the interaction of the ribosome with GTP-bound translation factors. The sequence is that of Large ribosomal subunit protein uL10 from Pseudomonas syringae pv. tomato (strain ATCC BAA-871 / DC3000).